The primary structure comprises 289 residues: Purine nucleoside phosphorylase (289 aa).

At Met-1 the chain carries N-acetylmethionine. Residues Ser-33, His-64, and Arg-84 to His-86 each bind phosphate. Tyr-88 contacts a purine D-ribonucleoside. Ala-116 contacts phosphate. Glu-201 and Met-219 together coordinate a purine D-ribonucleoside. Phosphate is bound at residue Ser-220. Asn-243 contacts a purine D-ribonucleoside. Ser-251 bears the Phosphoserine mark. Residue His-257 coordinates a purine D-ribonucleoside.

This sequence belongs to the PNP/MTAP phosphorylase family. As to quaternary structure, homotrimer. Expressed in red blood cells; overexpressed in red blood cells (cytoplasm) of patients with hereditary non-spherocytic hemolytic anemia of unknown etiology.

The protein resides in the cytoplasm. The enzyme catalyses inosine + phosphate = alpha-D-ribose 1-phosphate + hypoxanthine. It catalyses the reaction guanosine + phosphate = alpha-D-ribose 1-phosphate + guanine. The catalysed reaction is 2'-deoxyguanosine + phosphate = 2-deoxy-alpha-D-ribose 1-phosphate + guanine. It carries out the reaction 2'-deoxyinosine + phosphate = 2-deoxy-alpha-D-ribose 1-phosphate + hypoxanthine. Its pathway is purine metabolism; purine nucleoside salvage. With respect to regulation, inhibited by 5'-deaza-1'-aza-2c-deoxy-1'-(9-methylene)-Immucilin-G (DADMe-ImmG). Its function is as follows. Catalyzes the phosphorolytic breakdown of the N-glycosidic bond in the beta-(deoxy)ribonucleoside molecules, with the formation of the corresponding free purine bases and pentose-1-phosphate. Preferentially acts on 6-oxopurine nucleosides including inosine and guanosine. The protein is Purine nucleoside phosphorylase (PNP) of Homo sapiens (Human).